Consider the following 580-residue polypeptide: MPNRNILYATTLVDELARAGLRHVCLAPGSRNTPLVLAFARHPAIRVFSHLDERSAAFFALGLALATDTPAAVVCTSGSAAANFFPAIVEAHQAGVPLLALTADRPHELRDSGANQTIDQVKMFGSFARWSVDVALPEAMPPPVALRNLRTLAARAMAIAGGEPRGVVHLNLPFRPPLEPTPMPGDLTEPPAAAQPRDDGAPYTCFLRSAPPAPPEAVIEPIAAVLEQHERGLIVCGPRCPGGAFGALVSELSQRTGYPALVDGVSGVRFGYPGVIGGYETFLFGEHAFPPPEVVLRFGAVLTSKWLNQYLDTAASPVVIHVRASGVWADDSHRVSHFVVADEAAFIRALIPRLTERQSAWRQRFVEAEARVWAAVEAGIADEPYFDGGAVYDVIDLLPEGASLFVGNSLPVRHLDQFGKPGVRHICAFANRGASGIDGNISTALGIGAGRPDAPLAAIVGDITFYHDMNGLLAVRRCGVPATIVLLNNDGGGIFHRLPINRFEPEFTDYFVTPHGLDFAHAAKMYGLEYVPVKDRTAFRSAFRASIDARAATLIELRTDARTDLVRRNALIQAARATGA.

Positions 178–199 (LEPTPMPGDLTEPPAAAQPRDD) are disordered.

Belongs to the TPP enzyme family. MenD subfamily. Homodimer. Requires Mg(2+) as cofactor. It depends on Mn(2+) as a cofactor. The cofactor is thiamine diphosphate.

It carries out the reaction isochorismate + 2-oxoglutarate + H(+) = 5-enolpyruvoyl-6-hydroxy-2-succinyl-cyclohex-3-ene-1-carboxylate + CO2. The protein operates within quinol/quinone metabolism; 1,4-dihydroxy-2-naphthoate biosynthesis; 1,4-dihydroxy-2-naphthoate from chorismate: step 2/7. It functions in the pathway quinol/quinone metabolism; menaquinone biosynthesis. Catalyzes the thiamine diphosphate-dependent decarboxylation of 2-oxoglutarate and the subsequent addition of the resulting succinic semialdehyde-thiamine pyrophosphate anion to isochorismate to yield 2-succinyl-5-enolpyruvyl-6-hydroxy-3-cyclohexene-1-carboxylate (SEPHCHC). This is 2-succinyl-5-enolpyruvyl-6-hydroxy-3-cyclohexene-1-carboxylate synthase from Roseiflexus castenholzii (strain DSM 13941 / HLO8).